Here is a 115-residue protein sequence, read N- to C-terminus: Hydrogenase maturation factor HypA (115 aa).

H2 contributes to the Ni(2+) binding site. The Zn(2+) site is built by C74, C77, C90, and C93.

Belongs to the HypA/HybF family.

Involved in the maturation of [NiFe] hydrogenases. Required for nickel insertion into the metal center of the hydrogenase. This Desulfosudis oleivorans (strain DSM 6200 / JCM 39069 / Hxd3) (Desulfococcus oleovorans) protein is Hydrogenase maturation factor HypA.